A 622-amino-acid chain; its full sequence is Low affinity potassium transport system protein Kup (622 aa).

Helical transmembrane passes span 9–29, 49–69, 103–123, 137–157, 165–185, 213–233, 247–267, 276–296, 337–357, 363–383, 396–416, and 419–439; these read LPAI…TSPL, VFGF…IKYL, VIMG…TPAI, PQLD…LFMI, VGKL…GLGL, VSFI…VLYA, WFTV…ALLL, PFFL…AALA, IYIP…IVSF, LAAA…ILST, FVAL…TANL, and LLSG…VMTT.

The protein belongs to the HAK/KUP transporter (TC 2.A.72) family.

The protein resides in the cell inner membrane. It catalyses the reaction K(+)(in) + H(+)(in) = K(+)(out) + H(+)(out). Its function is as follows. Responsible for the low-affinity transport of potassium into the cell. Likely operates as a K(+):H(+) symporter. The sequence is that of Low affinity potassium transport system protein Kup from Shigella flexneri.